The following is a 491-amino-acid chain: Glutamate--tRNA ligase (491 aa).

The 'HIGH' region motif lies at 13 to 23 (PSPTGFLHIGN). Residues Cys-110, Cys-112, Cys-137, and His-139 each coordinate Zn(2+). The 'KMSKS' region signature appears at 254–258 (KLSKR). ATP is bound at residue Lys-257.

Belongs to the class-I aminoacyl-tRNA synthetase family. Glutamate--tRNA ligase type 1 subfamily. Monomer. It depends on Zn(2+) as a cofactor.

The protein localises to the cytoplasm. It carries out the reaction tRNA(Glu) + L-glutamate + ATP = L-glutamyl-tRNA(Glu) + AMP + diphosphate. In terms of biological role, catalyzes the attachment of glutamate to tRNA(Glu) in a two-step reaction: glutamate is first activated by ATP to form Glu-AMP and then transferred to the acceptor end of tRNA(Glu). This chain is Glutamate--tRNA ligase, found in Listeria welshimeri serovar 6b (strain ATCC 35897 / DSM 20650 / CCUG 15529 / CIP 8149 / NCTC 11857 / SLCC 5334 / V8).